Here is a 1904-residue protein sequence, read N- to C-terminus: MDQNGYNSSALQRPPRRGDEGCEEDRDSRPHHHHRHHHHHHHHRRDGDLPAGAVAGEAATASSNAGGANAHQHSTFSLRSPKPEYRPPPFSSPNGHNHSHHNTSTSSANHSLQSPPRPALPNPYMSSSTGAPGGPVAPALPPPVGINSSSSPGSSAAGLHQRHHQPGAPAHQHRAAPPPVSPLHPPVAYYPPGTNTDIYIPPPEPKPASRGFYDPTTDTTKERRISDAATPGASWHNANANAPPAGTPKTRDPYSYSQTADQHTPSYYNGGSYTSPRGPSYNRPRSPLSHSHQNPPAGSLSPPGQQPLLASPSVRHGTTANMNPTTNGASAIPPFKSDLAAPSPPKPAPSSTTSRANPMSFDSILSSSEPAPKPKEPSPIIAREPEIKEEREPRRDRESKRDSREPKQTKRSLEPELDHDTEVEKDVETEPEPLPSREKEKEPAPKKRGARKSTKGRASDIRDAATPKNGRRLSVKKESPTPRLPAKRQANGQPKPKTWSAEMEKKIQNAESDIENRAANLDADEFDEQQYKERAQKRRRVMSELDVEYGLSRRDALANTISKKLVLHAELGKRRYDDVFYDEALHEVREQEVYAEKERKKDMQRKRRREKSMAVTMEQKEAALARAEAAEDETERQKHLRDAERASKKAQQTKLILQKGIKGPARNLEINLEGGTMSSFQASDVESGEAGTPSGKRKGKGRSGPRLKKSKEQKQAEKDSAEAAQAALDAGEELPTKEENRVRIKIKKTKKDVAVDSEKDKDEAEKTEEEVVEKKTKKSKDKDKEKVDDIPDNEKRFMSKGYNQIYDQIWRDMARKDVNKTFKLAVDSYATKASNLKKTAILASKEAKRWQLRTNKGTKDLQARAKRVMRDMMGFWKRNEREERDLRKAAEKQEIENARKEEADREAARQKRKLNFLISQTELYSHFIGKKIKTDEVERSTDNPEIAKDAHQTDQKMLDIDEPTGPVIGKVTNFENLDFEEGSDEALRAAAMANAQNAIAEAQKKARDFNNQGLDMDDEGEMNFQNPTGLGDVEIEQPKLINAQLKEYQLKGLNWLVNLYEQGINGILADEMGLGKTVQSISVMAYLAEKHDIWGPFLVVAPASTLHNWQQEIAKFVPEFKILPYWGGASDRKVLRKFWDRKHTTYRKDAPFHVCVTSYQLVVSDVAYFQKMRWQYMILDEAQAIKSSQSSRWKALLNFHCRNRLLLTGTPIQNNMQELWALLHFIMPSLFDSHDEFSEWFSKDIESHAQSNTKLNEDQLKRLHMILKPFMLRRVKKHVQKELGDKIELDIFCDLTYRQRAYYSNLRNQINIMDLVEKATMGDDQDSGTLMNLVMQFRKVCNHPDLFERAEVNSPFACAYFAETASFVREGNDVAVGYSSRNLIEYELPRLVWRDGGRVHKAGPDSQVAGWKNRTLNHLMNIWSPDNIRDSSDGSKAFSWLRFADTSPNEAYQATHQSLIARAAKELQKRDRLGYMNVAYSDTEDANFTPAHALFQIRPRQNRKPLADITNEGILSRLMNVAQGDYDESGLGRLEPAGRPRASAPPIQVSCRSWASEFERSEVLFNAPIRKILYGPTVFEEKALVEKKLPMELWPTRQMLPKPDHEKKGFTNISIPSMQRFVTDSGKLAKLDDLLFKLKSEGHRVLLYFQMTRMIDMMEEYLTYRNYKYCRLDGSTKLEDRRDTVHDFQTRPEIFIFLLSTRAGGLGINLTTADTVIFYDSDWNPTIDSQAMDRAHRLGQTKQVTVYRLITRGTIEERIRKRAMQKEEVQRVVIQGGGASVDFSGRRAPENRNRDIAMWLADDEQAEMIERREKELLESGELEKQQKKKGGKRRKAENSASLDEMYHEGEGNFDDGSKGVSGTATPATAATPADSDSKGKKGRKGTKRAKTAKQRLAIADGMME.

A compositionally biased stretch (polar residues) spans 1–11 (MDQNGYNSSAL). Disordered stretches follow at residues 1-501 (MDQN…TWSA) and 594-792 (YAEK…DIPD). Positions 29-44 (RPHHHHRHHHHHHHHR) are enriched in basic residues. Low complexity-rich tracts occupy residues 51–70 (AGAV…GANA), 92–111 (SPNG…ANHS), and 148–158 (SSSSPGSSAAG). Residues 176-189 (APPPVSPLHPPVAY) show a composition bias toward pro residues. 2 stretches are compositionally biased toward polar residues: residues 255–277 (SYSQ…TSPR) and 316–329 (HGTT…TNGA). 2 stretches are compositionally biased toward basic and acidic residues: residues 383 to 428 (REPE…KDVE) and 435 to 445 (PSREKEKEPAP). Basic residues predominate over residues 446 to 455 (KKRGARKSTK). Coiled-coil stretches lie at residues 590 to 655 (EQEV…QTKL), 706 to 783 (RLKK…KDKD), and 877 to 922 (KRNE…SQTE). The span at 635–647 (ERQKHLRDAERAS) shows a compositional bias: basic and acidic residues. Positions 695 to 709 (GKRKGKGRSGPRLKK) are enriched in basic residues. 3 stretches are compositionally biased toward basic and acidic residues: residues 710–721 (SKEQKQAEKDSA), 751–764 (KDVA…KDEA), and 780–792 (KDKD…DIPD). In terms of domain architecture, DBINO spans 809 to 934 (IWRDMARKDV…SHFIGKKIKT (126 aa)). The region spanning 1057–1229 (VNLYEQGING…WALLHFIMPS (173 aa)) is the Helicase ATP-binding domain. ATP is bound at residue 1070-1077 (DEMGLGKT). Positions 1180–1183 (DEAQ) match the DEAQ box motif. The region spanning 1630–1789 (KLDDLLFKLK…SVDFSGRRAP (160 aa)) is the Helicase C-terminal domain. A compositionally biased stretch (basic and acidic residues) spans 1814–1825 (KELLESGELEKQ). The interval 1814–1904 (KELLESGELE…RLAIADGMME (91 aa)) is disordered. A compositionally biased stretch (basic residues) spans 1826 to 1835 (QKKKGGKRRK). Positions 1863 to 1873 (TATPATAATPA) are enriched in low complexity. Over residues 1880–1893 (KKGRKGTKRAKTAK) the composition is skewed to basic residues.

It belongs to the SNF2/RAD54 helicase family. In terms of assembly, component of the INO80 chromatin-remodeling complex.

The protein localises to the nucleus. The enzyme catalyses ATP + H2O = ADP + phosphate + H(+). In terms of biological role, ATPase component of the INO80 complex which remodels chromatin by shifting nucleosomes and is involved in DNA repair. The sequence is that of Chromatin-remodeling ATPase INO80 (INO80) from Gibberella zeae (strain ATCC MYA-4620 / CBS 123657 / FGSC 9075 / NRRL 31084 / PH-1) (Wheat head blight fungus).